The chain runs to 72 residues: UPF0270 protein YheU (72 aa).

The protein belongs to the UPF0270 family.

This chain is UPF0270 protein YheU, found in Escherichia coli (strain ATCC 8739 / DSM 1576 / NBRC 3972 / NCIMB 8545 / WDCM 00012 / Crooks).